The primary structure comprises 413 residues: Aspartate aminotransferase, cytoplasmic (413 aa).

Residues Gly39, Trp141, and Asn195 each coordinate L-aspartate. Lys259 carries the post-translational modification N6-(pyridoxal phosphate)lysine. Residue Arg387 participates in L-aspartate binding.

It belongs to the class-I pyridoxal-phosphate-dependent aminotransferase family. As to quaternary structure, homodimer. Requires pyridoxal 5'-phosphate as cofactor.

The protein resides in the cytoplasm. The catalysed reaction is L-aspartate + 2-oxoglutarate = oxaloacetate + L-glutamate. The enzyme catalyses L-cysteine + 2-oxoglutarate = 2-oxo-3-sulfanylpropanoate + L-glutamate. It carries out the reaction (2S)-2-aminobutanoate + 2-oxoglutarate = 2-oxobutanoate + L-glutamate. It catalyses the reaction 3-sulfino-L-alanine + 2-oxoglutarate = 3-sulfinopyruvate + L-glutamate. In terms of biological role, biosynthesis of L-glutamate from L-aspartate or L-cysteine. Important regulator of levels of glutamate, the major excitatory neurotransmitter of the vertebrate central nervous system. Acts as a scavenger of glutamate in brain neuroprotection. The aspartate aminotransferase activity is involved in hepatic glucose synthesis during development and in adipocyte glyceroneogenesis. Using L-cysteine as substrate, regulates levels of mercaptopyruvate, an important source of hydrogen sulfide. Mercaptopyruvate is converted into H(2)S via the action of 3-mercaptopyruvate sulfurtransferase (3MST). Hydrogen sulfide is an important synaptic modulator and neuroprotectant in the brain. The protein is Aspartate aminotransferase, cytoplasmic of Sus scrofa (Pig).